Consider the following 689-residue polypeptide: DNA ligase (689 aa).

Residues 40–44 (DAEYD), 89–90 (SL), and E121 each bind NAD(+). The active-site N6-AMP-lysine intermediate is the K123. Positions 144, 179, 295, and 319 each coordinate NAD(+). Positions 413, 416, 431, and 437 each coordinate Zn(2+). The BRCT domain occupies 610-689 (RAQSSLTGKI…EEWLTLIKNA (80 aa)).

The protein belongs to the NAD-dependent DNA ligase family. LigA subfamily. It depends on Mg(2+) as a cofactor. Mn(2+) is required as a cofactor.

The enzyme catalyses NAD(+) + (deoxyribonucleotide)n-3'-hydroxyl + 5'-phospho-(deoxyribonucleotide)m = (deoxyribonucleotide)n+m + AMP + beta-nicotinamide D-nucleotide.. In terms of biological role, DNA ligase that catalyzes the formation of phosphodiester linkages between 5'-phosphoryl and 3'-hydroxyl groups in double-stranded DNA using NAD as a coenzyme and as the energy source for the reaction. It is essential for DNA replication and repair of damaged DNA. This Rickettsia akari (strain Hartford) protein is DNA ligase.